The primary structure comprises 48 residues: GTKRVVVVGGGFGGASTAKYLRKLDPSISVTLVEPKTAFVTCPFSNAV.

An FAD-binding site is contributed by Val-40–Asn-46.

Dimer of one cytochrome and one flavoprotein.

It localises to the periplasm. It carries out the reaction hydrogen sulfide + 2 Fe(III)-[cytochrome c] = sulfur + 2 Fe(II)-[cytochrome c] + H(+). This chain is Sulfide dehydrogenase [flavocytochrome c] flavoprotein chain, found in Chlorobaculum thiosulfatiphilum (Chlorobium limicola f.sp. thiosulfatophilum).